The chain runs to 95 residues: MRKYELMYIANPQLDPEKLKGLVANLSNVITSNGGSVLSLKEIGLKDLAYEINKHRKGYYVWMLVEASPEAIAEYKRVVNITESVIRNIEVKEGE.

Belongs to the bacterial ribosomal protein bS6 family.

Functionally, binds together with bS18 to 16S ribosomal RNA. The polypeptide is Small ribosomal subunit protein bS6 (Acholeplasma laidlawii (strain PG-8A)).